The chain runs to 347 residues: CD5 antigen-like (347 aa).

An N-terminal signal peptide occupies residues 1–19 (MALLFSLILAICTRPGFLA). SRCR domains follow at residues 24 to 125 (VRLV…ASCE), 138 to 239 (VRLA…VECE), and 244 to 346 (LRLV…VICS). 11 disulfide bridges follow: Cys33–Cys67, Cys49–Cys114, Cys62–Cys124, Cys96–Cys106, Cys163–Cys228, Cys176–Cys238, Cys208–Cys218, Cys253–Cys287, Cys269–Cys335, Cys282–Cys345, and Cys315–Cys325.

In terms of assembly, interacts with FASN; the interaction is direct. Interacts (via SRCR2 and SRCR3) with pentameric IgM (via Fc region); disulfide-linked. Post-translationally, not N-glycosylated. Probably not O-glycosylated. Expressed in spleen, lymph node, thymus, bone marrow, and fetal liver, but not in non-lymphoid tissues.

It is found in the secreted. The protein localises to the cytoplasm. Functionally, secreted protein that acts as a key regulator of lipid synthesis: mainly expressed by macrophages in lymphoid and inflamed tissues and regulates mechanisms in inflammatory responses, such as infection or atherosclerosis. Able to inhibit lipid droplet size in adipocytes. Following incorporation into mature adipocytes via CD36-mediated endocytosis, associates with cytosolic FASN, inhibiting fatty acid synthase activity and leading to lipolysis, the degradation of triacylglycerols into glycerol and free fatty acids (FFA). CD5L-induced lipolysis occurs with progression of obesity: participates in obesity-associated inflammation following recruitment of inflammatory macrophages into adipose tissues, a cause of insulin resistance and obesity-related metabolic disease. Regulation of intracellular lipids mediated by CD5L has a direct effect on transcription regulation mediated by nuclear receptors ROR-gamma (RORC). Acts as a key regulator of metabolic switch in T-helper Th17 cells. Regulates the expression of pro-inflammatory genes in Th17 cells by altering the lipid content and limiting synthesis of cholesterol ligand of RORC, the master transcription factor of Th17-cell differentiation. CD5L is mainly present in non-pathogenic Th17 cells, where it decreases the content of polyunsaturated fatty acyls (PUFA), affecting two metabolic proteins MSMO1 and CYP51A1, which synthesize ligands of RORC, limiting RORC activity and expression of pro-inflammatory genes. Participates in obesity-associated autoimmunity via its association with IgM, interfering with the binding of IgM to Fcalpha/mu receptor and enhancing the development of long-lived plasma cells that produce high-affinity IgG autoantibodies. Also acts as an inhibitor of apoptosis in macrophages: promotes macrophage survival from the apoptotic effects of oxidized lipids in case of atherosclerosis. Involved in early response to microbial infection against various pathogens by acting as a pattern recognition receptor and by promoting autophagy. In Homo sapiens (Human), this protein is CD5 antigen-like (CD5L).